Consider the following 186-residue polypeptide: Peptide deformylase (186 aa).

2 residues coordinate Fe cation: cysteine 99 and histidine 141. Glutamate 142 is an active-site residue. A Fe cation-binding site is contributed by histidine 145.

This sequence belongs to the polypeptide deformylase family. The cofactor is Fe(2+).

The catalysed reaction is N-terminal N-formyl-L-methionyl-[peptide] + H2O = N-terminal L-methionyl-[peptide] + formate. Functionally, removes the formyl group from the N-terminal Met of newly synthesized proteins. Requires at least a dipeptide for an efficient rate of reaction. N-terminal L-methionine is a prerequisite for activity but the enzyme has broad specificity at other positions. In Chlamydia caviae (strain ATCC VR-813 / DSM 19441 / 03DC25 / GPIC) (Chlamydophila caviae), this protein is Peptide deformylase.